The chain runs to 141 residues: Nucleoside diphosphate kinase (141 aa).

6 residues coordinate ATP: Lys-11, Phe-59, Arg-87, Thr-93, Arg-104, and Asn-114. The active-site Pros-phosphohistidine intermediate is the His-117.

It belongs to the NDK family. In terms of assembly, homotetramer. Requires Mg(2+) as cofactor.

The protein localises to the cytoplasm. It carries out the reaction a 2'-deoxyribonucleoside 5'-diphosphate + ATP = a 2'-deoxyribonucleoside 5'-triphosphate + ADP. The enzyme catalyses a ribonucleoside 5'-diphosphate + ATP = a ribonucleoside 5'-triphosphate + ADP. In terms of biological role, major role in the synthesis of nucleoside triphosphates other than ATP. The ATP gamma phosphate is transferred to the NDP beta phosphate via a ping-pong mechanism, using a phosphorylated active-site intermediate. The sequence is that of Nucleoside diphosphate kinase from Bdellovibrio bacteriovorus (strain ATCC 15356 / DSM 50701 / NCIMB 9529 / HD100).